Reading from the N-terminus, the 465-residue chain is Cysteine--tRNA ligase (465 aa).

C27 contributes to the Zn(2+) binding site. A 'HIGH' region motif is present at residues 29 to 39 (PTVYDDAHLGH). The segment at 153–173 (DISHKVSDDDTQSRVEHNSEK) is disordered. Residues C208, H237, and E241 each contribute to the Zn(2+) site. Residues 269-273 (KMSKS) carry the 'KMSKS' region motif. K272 contributes to the ATP binding site.

The protein belongs to the class-I aminoacyl-tRNA synthetase family. As to quaternary structure, monomer. It depends on Zn(2+) as a cofactor.

The protein resides in the cytoplasm. The enzyme catalyses tRNA(Cys) + L-cysteine + ATP = L-cysteinyl-tRNA(Cys) + AMP + diphosphate. This chain is Cysteine--tRNA ligase, found in Sulfurovum sp. (strain NBC37-1).